The sequence spans 289 residues: E3 ubiquitin-protein ligase MARCHF8 (289 aa).

Residues 1-68 are disordered; the sequence is MNMPLHQISA…SAPVSSFPRT (68 aa). Positions 25–39 are enriched in basic and acidic residues; it reads KTKEKEREEQNEKTL. A compositionally biased stretch (low complexity) spans 50 to 64; it reads SKAGGSSVASAPVSS. The segment at 70–131 adopts an RING-CH-type zinc-finger fold; sequence VTPSNQDICR…ELCKYEFIME (62 aa). Zn(2+) contacts are provided by Cys78, Cys81, Cys95, Cys97, His105, Cys108, Cys121, and Cys124. 2 consecutive transmembrane segments (helical) span residues 155–175 and 195–215; these read CSVTFHVIAITCVVWSLYVLI and FWTKLVVVAIGFTGGLLFMYV.

Interacts with CD86.

Its subcellular location is the golgi apparatus membrane. It localises to the endoplasmic reticulum membrane. It is found in the cytoplasmic vesicle membrane. The protein localises to the lysosome membrane. The protein resides in the early endosome membrane. The enzyme catalyses S-ubiquitinyl-[E2 ubiquitin-conjugating enzyme]-L-cysteine + [acceptor protein]-L-lysine = [E2 ubiquitin-conjugating enzyme]-L-cysteine + N(6)-ubiquitinyl-[acceptor protein]-L-lysine.. The protein operates within protein modification; protein ubiquitination. In terms of biological role, E3 ubiquitin-protein ligase that plays several important roles in innate immunity and adaptive immunity. Mediates ubiquitination of CD86 and MHC class II proteins, such as HLA-DR alpha and beta, and promotes their subsequent endocytosis and sorting to lysosomes via multivesicular bodies. Possesses a very broad antiviral activity by specifically inactivating different viral fusion proteins. Targets and ubiquitinates cytoplasmic lysine residues of viral envelope glycoproteins with single transmembrane domains leading to their lysosomal degradation. Mediates the regulation of constitutive ubiquitination and trafficking of the viral restriction factor BST2 within the endocytic pathway. Plays a role in maintenance of immune tolerance to self by promoting the turnover and proteasomal degradation of PD-L1/CD274 via ubiquitination. Catalyzes the 'Lys-63'-linked polyubiquitylation of cGAS thereby inhibiting its DNA binding ability and impairing its antiviral innate immunity. Negatively regulates IL7-mediated T-cell homeostasis by mediating 'Lys-27'-linked polyubiquitination of IL7R, leading to its lysosomal degradation. In Bos taurus (Bovine), this protein is E3 ubiquitin-protein ligase MARCHF8 (MARCHF8).